Here is a 482-residue protein sequence, read N- to C-terminus: tRNA-2-methylthio-N(6)-dimethylallyladenosine synthase (482 aa).

The MTTase N-terminal domain occupies Lys3–Gly120. The [4Fe-4S] cluster site is built by Cys12, Cys49, Cys83, Cys158, Cys162, and Cys165. The Radical SAM core domain maps to Lys144 to Gln376. Residues Arg379 to Arg442 enclose the TRAM domain.

The protein belongs to the methylthiotransferase family. MiaB subfamily. As to quaternary structure, monomer. The cofactor is [4Fe-4S] cluster.

The protein localises to the cytoplasm. The catalysed reaction is N(6)-dimethylallyladenosine(37) in tRNA + (sulfur carrier)-SH + AH2 + 2 S-adenosyl-L-methionine = 2-methylsulfanyl-N(6)-dimethylallyladenosine(37) in tRNA + (sulfur carrier)-H + 5'-deoxyadenosine + L-methionine + A + S-adenosyl-L-homocysteine + 2 H(+). Functionally, catalyzes the methylthiolation of N6-(dimethylallyl)adenosine (i(6)A), leading to the formation of 2-methylthio-N6-(dimethylallyl)adenosine (ms(2)i(6)A) at position 37 in tRNAs that read codons beginning with uridine. This chain is tRNA-2-methylthio-N(6)-dimethylallyladenosine synthase, found in Pseudoalteromonas translucida (strain TAC 125).